The sequence spans 499 residues: Lysine--tRNA ligase (499 aa).

Mg(2+)-binding residues include Glu-408 and Glu-415.

This sequence belongs to the class-II aminoacyl-tRNA synthetase family. As to quaternary structure, homodimer. It depends on Mg(2+) as a cofactor.

The protein localises to the cytoplasm. It carries out the reaction tRNA(Lys) + L-lysine + ATP = L-lysyl-tRNA(Lys) + AMP + diphosphate. The polypeptide is Lysine--tRNA ligase (Bacillus cereus (strain ATCC 10987 / NRS 248)).